The following is a 307-amino-acid chain: Ribonuclease Z (307 aa).

Zn(2+) is bound by residues His-61, His-63, Asp-65, His-66, His-138, Asp-208, and His-264. Asp-65 functions as the Proton acceptor in the catalytic mechanism.

It belongs to the RNase Z family. As to quaternary structure, homodimer. Requires Zn(2+) as cofactor.

It catalyses the reaction Endonucleolytic cleavage of RNA, removing extra 3' nucleotides from tRNA precursor, generating 3' termini of tRNAs. A 3'-hydroxy group is left at the tRNA terminus and a 5'-phosphoryl group is left at the trailer molecule.. In terms of biological role, zinc phosphodiesterase, which displays some tRNA 3'-processing endonuclease activity. Probably involved in tRNA maturation, by removing a 3'-trailer from precursor tRNA. In Pyrococcus abyssi (strain GE5 / Orsay), this protein is Ribonuclease Z.